The primary structure comprises 200 residues: Pyridoxal 5'-phosphate synthase subunit PdxT (200 aa).

52-54 serves as a coordination point for L-glutamine; that stretch reads GES. Catalysis depends on Cys84, which acts as the Nucleophile. L-glutamine contacts are provided by residues Arg116 and 145–146; that span reads IR. Active-site charge relay system residues include His181 and Glu183.

Belongs to the glutaminase PdxT/SNO family. As to quaternary structure, in the presence of PdxS, forms a dodecamer of heterodimers. Only shows activity in the heterodimer.

It catalyses the reaction aldehydo-D-ribose 5-phosphate + D-glyceraldehyde 3-phosphate + L-glutamine = pyridoxal 5'-phosphate + L-glutamate + phosphate + 3 H2O + H(+). The enzyme catalyses L-glutamine + H2O = L-glutamate + NH4(+). It functions in the pathway cofactor biosynthesis; pyridoxal 5'-phosphate biosynthesis. In terms of biological role, catalyzes the hydrolysis of glutamine to glutamate and ammonia as part of the biosynthesis of pyridoxal 5'-phosphate. The resulting ammonia molecule is channeled to the active site of PdxS. The polypeptide is Pyridoxal 5'-phosphate synthase subunit PdxT (Saccharolobus islandicus (strain L.S.2.15 / Lassen #1) (Sulfolobus islandicus)).